Consider the following 1582-residue polypeptide: SET-binding protein (1582 aa).

Disordered regions lie at residues 1–76 (MEPR…WVAG), 124–246 (ITIK…KVPA), 278–416 (LLGS…KRQS), and 446–513 (SNSE…KLSE). Residues 18–27 (EFLQGSSSRS) are compositionally biased toward polar residues. Basic and acidic residues predominate over residues 57–74 (GSGRDVDCNSNADSEKWV). 2 stretches are compositionally biased toward polar residues: residues 126 to 141 (IKQSGDQKVSRTGKNS) and 213 to 229 (MEWSSNSDSGPATQNCF). A compositionally biased stretch (low complexity) spans 278-298 (LLGSVVPSPSSHNSPATPSSS). Residues 356-365 (ETTEGKREAY) show a composition bias toward basic and acidic residues. Positions 368–388 (DSAQEASPARQSISSVSNPEN) are enriched in polar residues. The span at 450–465 (GSKKDPRVPKLGKMIE) shows a compositional bias: basic and acidic residues. A DNA-binding region (a.T hook 1) is located at residues 575–587 (KKKRGRPKKQPLL). Disordered stretches follow at residues 595 to 617 (GTSTSPVSPISREFPGTKKRKRR) and 709 to 787 (RGTI…ASTE). The segment covering 770-787 (LSTQLGGSNGNLSPASTE) has biased composition (polar residues). Lys-808 is subject to N6-acetyllysine. The span at 845-871 (SPVSESHSEETIPSDSGIGTDNNSTSD) shows a compositional bias: polar residues. The segment at 845 to 880 (SPVSESHSEETIPSDSGIGTDNNSTSDQAEKSSESR) is disordered. A DNA-binding region (a.T hook 2) is located at residues 1007 to 1019 (KKKRGRPAKTNDT). 6 disordered regions span residues 1128–1155 (VGGATLSSSRLHKRKHKHKRKHKEDRIL), 1182–1215 (SGSDKELPLVSEKSKHKERQKHQHGEASHKVSKN), 1236–1265 (AKDKGDLSSEPVESCAKRYSGSGGDSTRSE), 1429–1461 (QRQSKTGNNFVKKRRGRPRKQPSQFDEDSRDQM), 1470–1489 (LPSKRGQKPSLSPLALEPAS), and 1507–1582 (EAPP…DVLP). A compositionally biased stretch (basic residues) spans 1137 to 1150 (RLHKRKHKHKRKHK). The segment covering 1182–1196 (SGSDKELPLVSEKSK) has biased composition (basic and acidic residues). The span at 1439 to 1448 (VKKRRGRPRK) shows a compositional bias: basic residues. Residues 1440–1452 (KKRRGRPRKQPSQ) constitute a DNA-binding region (a.T hook 3). Pro residues-rich tracts occupy residues 1509–1533 (PPLPPPPPPPLPPPPPPPPPPPPLP) and 1546–1559 (QPPAQPAQPTPQPL).

In terms of assembly, interacts with SET.

Its subcellular location is the nucleus. This Mus musculus (Mouse) protein is SET-binding protein (Setbp1).